We begin with the raw amino-acid sequence, 152 residues long: Transcriptional regulator MraZ (152 aa).

2 SpoVT-AbrB domains span residues Ala5–Glu52 and Ala81–Glu124.

It belongs to the MraZ family. In terms of assembly, forms oligomers.

It is found in the cytoplasm. The protein localises to the nucleoid. This Mannheimia succiniciproducens (strain KCTC 0769BP / MBEL55E) protein is Transcriptional regulator MraZ.